Here is a 61-residue protein sequence, read N- to C-terminus: Large ribosomal subunit protein bL28 (61 aa).

The segment at 1–26 (MAKDFINGKRTQFGNKRSHALNSSRR) is disordered. Over residues 9 to 25 (KRTQFGNKRSHALNSSR) the composition is skewed to polar residues.

It belongs to the bacterial ribosomal protein bL28 family.

This Limosilactobacillus reuteri (strain DSM 20016) (Lactobacillus reuteri) protein is Large ribosomal subunit protein bL28.